A 350-amino-acid chain; its full sequence is Geranylgeranyl pyrophosphate synthase (350 aa).

Isopentenyl diphosphate is bound by residues K66, R69, and H98. Residues D105 and D109 each coordinate Mg(2+). R114 contacts dimethylallyl diphosphate. R115 contributes to the isopentenyl diphosphate binding site. 5 residues coordinate dimethylallyl diphosphate: K200, T201, Q236, N243, and K263.

The protein belongs to the FPP/GGPP synthase family. The cofactor is Mg(2+).

The catalysed reaction is isopentenyl diphosphate + dimethylallyl diphosphate = (2E)-geranyl diphosphate + diphosphate. It carries out the reaction isopentenyl diphosphate + (2E)-geranyl diphosphate = (2E,6E)-farnesyl diphosphate + diphosphate. The enzyme catalyses isopentenyl diphosphate + (2E,6E)-farnesyl diphosphate = (2E,6E,10E)-geranylgeranyl diphosphate + diphosphate. It participates in secondary metabolite biosynthesis; terpenoid biosynthesis. In terms of biological role, geranylgeranyl pyrophosphate synthase; part of the gene cluster that mediates the biosynthesis of pleuromutilin, a tricyclic diterpene showing antibacterial properties. The geranylgeranyl diphosphate (GGPP) synthase ple4 catalyzes the first step in pleuromutilin biosynthesis. GGPP is then substrate of the premutilin synthase (PS) ple3 to yield premutilin. Premutilin synthase is a bifunctional enzyme composed of the fusion of a class II diterpene cyclase (DTC) and a class I diterpene synthase (DTS), with the corresponding domains and active sites containing characteristic aspartate-rich motifs. GGPP is first converted to mutildienyl-diphosphate (MPP) at the class II DTC site. MPP is subsequently further cyclized at the class I DTS site, followed by a 1,5-hydride shift and addition of water prior to terminating deprotonation, to yield premutilin. The cytochrome P450 monooxygenases ple5 and ple6 hydroxylate premutilin at C-11 and C-3, respectively, producing 11-hydroxypremutilin and 3-hydroxypremutilin. The combination of the actions of both ple5 and ple6 leads to the production of 3,11-dihydroxypremutilin. The short chain dehydrogenase ple7 further converts 3,11-dihydroxypremutilin into mutilin. The acetyltransferase ple2 then acetylates mutilin to produce 14-O-acetylmutilin. Finally, the cytochrome P450 monooxygenase ple1 catalyzes hydroxylation on the alpha position of the acetyl side chain of 14-O-acetylmutilin to yield pleuromutilin. The polypeptide is Geranylgeranyl pyrophosphate synthase (Rhodocybe pseudopiperita (Clitopilus pseudopiperitus)).